Reading from the N-terminus, the 289-residue chain is MSGFSTEERAAPFSLEYRVFLKNEKGQYISPFHDIPIYADKDVFHMVVEVPRWSNAKMEIATKDPLNPIKQDVKKGKLRYVANLFPYKGYIWNYGAIPQTWEDPGHNDKHTGCCGDNDPIDVCEIGSKVCARGEIIGVKVLGILAMIDEGETDWKVIAINVDDPDAANYNDINDVKRLKPGYLEATVDWFRRYKVPDGKPENEFAFNAEFKDKDFAIDIIKSTHDHWKALVTKKTNGKGISCMNTTVSESPFKCDPDAARAIVDALPPPCESACTVPTDVDKWFHHQKN.

Serine 2 carries the N-acetylserine modification. Lysine 57 carries the N6-acetyllysine modification. 3 residues coordinate Mg(2+): aspartate 116, aspartate 121, and aspartate 153. Residue lysine 228 is modified to N6-acetyllysine. Serine 250 is subject to Phosphoserine.

This sequence belongs to the PPase family. In terms of assembly, homodimer. Requires Mg(2+) as cofactor.

It localises to the cytoplasm. It carries out the reaction diphosphate + H2O = 2 phosphate + H(+). In Macaca fascicularis (Crab-eating macaque), this protein is Inorganic pyrophosphatase (PPA1).